The sequence spans 154 residues: AP-1 complex subunit sigma-2 (154 aa).

The protein belongs to the adaptor complexes small subunit family. Adaptor protein complex 1 (AP-1) is a heterotetramer composed of two large adaptins (gamma-type subunit and beta-type subunit), a medium adaptin (mu-type subunit) and a small adaptin (sigma-type subunit).

The protein localises to the golgi apparatus. The protein resides in the trans-Golgi network. Its subcellular location is the cytoplasmic vesicle. It is found in the clathrin-coated vesicle membrane. Its function is as follows. Subunit of clathrin-associated adaptor protein complex 1 that plays a role in protein sorting in the trans-Golgi network (TGN) and endosomes. The AP complexes mediate the recruitment of clathrin to membranes and the recognition of sorting signals within the cytosolic tails of transmembrane cargo molecules. Also involved in early steps of phagocytosis and macropinocytosis. The chain is AP-1 complex subunit sigma-2 (ap1s2) from Dictyostelium discoideum (Social amoeba).